The following is a 37-amino-acid chain: Large ribosomal subunit protein bL36c (37 aa).

Belongs to the bacterial ribosomal protein bL36 family.

The protein resides in the plastid. The protein localises to the chloroplast. This Chloranthus spicatus (Chulantree) protein is Large ribosomal subunit protein bL36c.